A 297-amino-acid polypeptide reads, in one-letter code: MGFVKVVKNKAYFKRYQVKFRRRREGKTDYYARKRLVIQDKNKYNTPKYRMIVRVTNRDIICQIAYARIEGDMIVCAAYAHELPKYGVKVGLTNYAAAYCTGLLLARRLLNRFGMDKIYEGQVEVTGDEYNVESIDGQPGAFTCYLDAGLARTTTGNKVFGALKGAVDGGLSIPHSTKRFPGYDSESKEFNAEVHRKHIMGQNVADYMRYLMEEDEDAYKKQFSQYIKNSVTPDMMEEMYKKAHAAIRENPVYEKKPKKEVKKKRWNRPKMSLAQKKDRVAQKKASFLRAQERAAES.

N-acetylglycine is present on Gly2. N6-acetyllysine is present on residues Lys5 and Lys48. The residue at position 185 (Ser185) is a Phosphoserine. Lys220 bears the N6-acetyllysine; alternate mark. A Glycyl lysine isopeptide (Lys-Gly) (interchain with G-Cter in SUMO1); alternate cross-link involves residue Lys220. Lys220 participates in a covalent cross-link: Glycyl lysine isopeptide (Lys-Gly) (interchain with G-Cter in SUMO2); alternate. At Thr232 the chain carries Phosphothreonine. A disordered region spans residues 253-297 (YEKKPKKEVKKKRWNRPKMSLAQKKDRVAQKKASFLRAQERAAES). The segment covering 258–268 (KKEVKKKRWNR) has biased composition (basic residues). At Ser272 the chain carries Phosphoserine.

This sequence belongs to the universal ribosomal protein uL18 family. As to quaternary structure, component of the large ribosomal subunit (LSU). Part of the 5S RNP complex, which is a LSU subcomplex composed of the 5S RNA, RPL5 and RPL11. Component of a hexameric 5S RNP precursor complex, composed of 5S RNA, RRS1, RPF2/BXDC1, RPL5, RPL11 and HEATR3; this complex acts as a precursor for ribosome assembly. Interacts with isoform 1 of NVL in an ATP-dependent manner. Interacts with RRP1B. Interacts with IPO5, IPO7 and KPNB1; these interactions may be involved in RPL5 nuclear import for the assembly of ribosomal subunits.

It localises to the cytoplasm. The protein resides in the nucleus. The protein localises to the nucleolus. In terms of biological role, component of the ribosome, a large ribonucleoprotein complex responsible for the synthesis of proteins in the cell. The small ribosomal subunit (SSU) binds messenger RNAs (mRNAs) and translates the encoded message by selecting cognate aminoacyl-transfer RNA (tRNA) molecules. The large subunit (LSU) contains the ribosomal catalytic site termed the peptidyl transferase center (PTC), which catalyzes the formation of peptide bonds, thereby polymerizing the amino acids delivered by tRNAs into a polypeptide chain. The nascent polypeptides leave the ribosome through a tunnel in the LSU and interact with protein factors that function in enzymatic processing, targeting, and the membrane insertion of nascent chains at the exit of the ribosomal tunnel. As part of the 5S RNP/5S ribonucleoprotein particle it is an essential component of the LSU, required for its formation and the maturation of rRNAs. It also couples ribosome biogenesis to p53/TP53 activation. As part of the 5S RNP it accumulates in the nucleoplasm and inhibits MDM2, when ribosome biogenesis is perturbed, mediating the stabilization and the activation of TP53. The protein is Large ribosomal subunit protein uL18 (RPL5) of Homo sapiens (Human).